The chain runs to 1150 residues: Cell division cycle and apoptosis regulator protein 1 (1150 aa).

The interval 1–249 (MAQFGGQKNP…TQPQPQSLLQ (249 aa)) is interaction with AR. 2 disordered regions span residues 124 to 146 (PTAQ…QPQK) and 285 to 354 (IVSQ…SPRR). The segment covering 134–146 (TPRSSQQQTQPQK) has biased composition (low complexity). Residues 203–660 (QRIQTLPNQN…RALSSKGLKS (458 aa)) form an interaction with GATA2 region. Composition is skewed to basic and acidic residues over residues 293-334 (RRLD…ERSP) and 341-352 (ERSPRRERERSP). Position 456 is a phosphoserine (serine 456). A coiled-coil region spans residues 594–618 (KQQLVEKLQGERKEADGEQDEEEKD). The interval 600 to 638 (KLQGERKEADGEQDEEEKDDGEAKEISTPTHWSKLDPKT) is disordered. The segment covering 610 to 621 (GEQDEEEKDDGE) has biased composition (acidic residues). Threonine 627 bears the Phosphothreonine mark. Residues 636–670 (PKTMKVNDLRKELESRALSSKGLKSQLIARLTKQL) enclose the SAP domain. A Glycyl lysine isopeptide (Lys-Gly) (interchain with G-Cter in ubiquitin) cross-link involves residue lysine 637. The interval 643–1150 (DLRKELESRA…QKSKENGASV (508 aa)) is interaction with GATA1. Residue threonine 667 is modified to Phosphothreonine. Basic and acidic residues-rich tracts occupy residues 673 to 687 (EEQK…KSEK), 694 to 713 (DRKS…EEIE), 796 to 817 (KEDK…KKEE), and 832 to 855 (SGDD…KDDS). Disordered regions lie at residues 673-713 (EEQK…EEIE) and 796-915 (KEDK…EKEK). Residues serine 685 and serine 697 each carry the phosphoserine modification. A compositionally biased stretch (acidic residues) spans 856–889 (KDDDETEEDNNQDEYDPMEAEEAEDEEDDRDEEE). Threonine 861 is subject to Phosphothreonine. Basic and acidic residues predominate over residues 890–915 (MTKRDDKRDINRYCKERPSKDKEKEK). A Glycyl lysine isopeptide (Lys-Gly) (interchain with G-Cter in SUMO1); alternate cross-link involves residue lysine 1012. Lysine 1012 is covalently cross-linked (Glycyl lysine isopeptide (Lys-Gly) (interchain with G-Cter in SUMO2); alternate). A coiled-coil region spans residues 1033–1114 (DVGSLLQKLE…LQFENQMNKT (82 aa)). Residues lysine 1067 and lysine 1135 each participate in a glycyl lysine isopeptide (Lys-Gly) (interchain with G-Cter in SUMO2) cross-link.

As to quaternary structure, directly interacts with ESR1, NR3C1 and p53/TP53. Interacts (via N-terminus) with CALCOCO1. Interacts with MED1. Interacts with GATA1. Interacts with AR and GATA2. As to expression, expressed in various epithelial cancer cell lines, including breast, colon, prostate, pancreatic and leukemia. Expression is regulated by growth factors.

Its subcellular location is the cytoplasm. The protein resides in the perinuclear region. Its function is as follows. Associates with components of the Mediator and p160 coactivator complexes that play a role as intermediaries transducing regulatory signals from upstream transcriptional activator proteins to basal transcription machinery at the core promoter. Recruited to endogenous nuclear receptor target genes in response to the appropriate hormone. Also functions as a p53 coactivator. May thus play an important role in transcriptional regulation. May be involved in apoptosis signaling in the presence of the reinoid CD437. Apoptosis induction involves sequestration of 14-3-3 protein(s) and mediated altered expression of multiple cell cycle regulatory genes including MYC, CCNB1 and CDKN1A. Plays a role in cell cycle progression and/or cell proliferation. In association with CALCOCO1 enhances GATA1- and MED1-mediated transcriptional activation from the gamma-globin promoter during erythroid differentiation of K562 erythroleukemia cells. Can act as a both a coactivator and corepressor of AR-mediated transcription. Contributes to chromatin looping and AR transcription complex assembly by stabilizing AR-GATA2 association on chromatin and facilitating MED1 and RNA polymerase II recruitment to AR-binding sites. May play an important role in the growth and tumorigenesis of prostate cancer cells. In Homo sapiens (Human), this protein is Cell division cycle and apoptosis regulator protein 1 (CCAR1).